A 149-amino-acid polypeptide reads, in one-letter code: Nucleoside diphosphate kinase (149 aa).

Residues K9, F57, R85, T91, R102, and N112 each coordinate ATP. The Pros-phosphohistidine intermediate role is filled by H115.

This sequence belongs to the NDK family. Homotetramer. The cofactor is Mg(2+).

It is found in the cytoplasm. The catalysed reaction is a 2'-deoxyribonucleoside 5'-diphosphate + ATP = a 2'-deoxyribonucleoside 5'-triphosphate + ADP. It catalyses the reaction a ribonucleoside 5'-diphosphate + ATP = a ribonucleoside 5'-triphosphate + ADP. In terms of biological role, major role in the synthesis of nucleoside triphosphates other than ATP. The ATP gamma phosphate is transferred to the NDP beta phosphate via a ping-pong mechanism, using a phosphorylated active-site intermediate. The sequence is that of Nucleoside diphosphate kinase from Gloeobacter violaceus (strain ATCC 29082 / PCC 7421).